A 142-amino-acid polypeptide reads, in one-letter code: Large ribosomal subunit protein bL19 (142 aa).

This sequence belongs to the bacterial ribosomal protein bL19 family.

Its function is as follows. This protein is located at the 30S-50S ribosomal subunit interface and may play a role in the structure and function of the aminoacyl-tRNA binding site. The polypeptide is Large ribosomal subunit protein bL19 (Psychrobacter cryohalolentis (strain ATCC BAA-1226 / DSM 17306 / VKM B-2378 / K5)).